Here is a 276-residue protein sequence, read N- to C-terminus: Plant cysteine oxidase 2 (276 aa).

A disordered region spans residues 1 to 40 (MGTDTVMSGRVRKDLSKTNPNGNIPENRSNSRKKIQRRSK). The segment covering 17 to 28 (KTNPNGNIPENR) has biased composition (polar residues). Over residues 30-40 (NSRKKIQRRSK) the composition is skewed to basic residues. Residues H134, H136, and H197 each contribute to the Fe cation site.

The protein belongs to the cysteine dioxygenase family. It depends on Fe(2+) as a cofactor.

It is found in the nucleus. Its subcellular location is the cytoplasm. The enzyme catalyses L-cysteine + O2 = 3-sulfino-L-alanine + H(+). In terms of biological role, catalyzes the oxidation of N-terminal cysteine residues (N-Cys), thus preparing the protein for N-end rule pathway-mediated proteasomal degradation, upstream of the N-end rule enzymes ATE1, ATE2 and PRT6. Controls the preparation of the group VII ethylene response factor (ERF-VII) proteins for degradation via the 26S proteasome N-end rule pathway. Acts as an oxygen sensor that controls the stability of ERF-VII proteins, which are stabilized in flooding-induced hypoxia, and regulate transcriptional adaptation to these adverse conditions. Not active on Cys located inside or at the C-terminus of a peptide. Acts redundantly with PCO1 to repress the anaerobic response. The chain is Plant cysteine oxidase 2 from Arabidopsis thaliana (Mouse-ear cress).